The chain runs to 193 residues: uncharacterized protein (193 aa).

3 consecutive transmembrane segments (helical) span residues 5 to 25 (LILL…FIIF), 63 to 83 (IFIL…LINI), and 90 to 110 (ILTF…LTPA).

Its subcellular location is the cell membrane. This is an uncharacterized protein from Methanocaldococcus jannaschii (strain ATCC 43067 / DSM 2661 / JAL-1 / JCM 10045 / NBRC 100440) (Methanococcus jannaschii).